The chain runs to 581 residues: Proline--tRNA ligase (581 aa).

It belongs to the class-II aminoacyl-tRNA synthetase family. ProS type 1 subfamily. As to quaternary structure, homodimer.

It is found in the cytoplasm. The catalysed reaction is tRNA(Pro) + L-proline + ATP = L-prolyl-tRNA(Pro) + AMP + diphosphate. Catalyzes the attachment of proline to tRNA(Pro) in a two-step reaction: proline is first activated by ATP to form Pro-AMP and then transferred to the acceptor end of tRNA(Pro). As ProRS can inadvertently accommodate and process non-cognate amino acids such as alanine and cysteine, to avoid such errors it has two additional distinct editing activities against alanine. One activity is designated as 'pretransfer' editing and involves the tRNA(Pro)-independent hydrolysis of activated Ala-AMP. The other activity is designated 'posttransfer' editing and involves deacylation of mischarged Ala-tRNA(Pro). The misacylated Cys-tRNA(Pro) is not edited by ProRS. This is Proline--tRNA ligase from Polaromonas naphthalenivorans (strain CJ2).